The following is a 323-amino-acid chain: MEGLEENGSVQVGELLPCKICGRTFFPVALKKHGPICQKTATKKRKTFDSSRQRAEGTDIPTVKPLKPRPEPPKKPSNWRRKHEEFIATIRAAKGLGQVLKEGGKLPPPPPPSYDPDYIQCPYCQRRFNENAADRHINFCKEQAARISNKGKFSTDTKGKSTSRTQYKPPALKKFNSPGTTSSGSSRLPQPSGTSKTVVGAPSGKVSSVSSSSGNKLQTLSPSHKGIPAPHVGTNIKPRNSTPPSLARNPASGVLTSKRKTYSDSYMARPDGDYISSFNGGNTKGIEGNSAGHLPKFCHECGTKYPVEWAKFCCECGVRRMVL.

The C2HC/C3H-type 1 zinc-finger motif lies at 14-43 (ELLPCKICGRTFFPVALKKHGPICQKTATK). The Zn(2+) site is built by C18, C21, H33, and C37. The segment at 42–81 (TKKRKTFDSSRQRAEGTDIPTVKPLKPRPEPPKKPSNWRR) is disordered. The segment covering 47–57 (TFDSSRQRAEG) has biased composition (basic and acidic residues). The C2HC/C3H-type 2 zinc-finger motif lies at 117 to 146 (DYIQCPYCQRRFNENAADRHINFCKEQAAR). Zn(2+) is bound by residues C121, C124, H136, and C140. Residues 149-258 (NKGKFSTDTK…NPASGVLTSK (110 aa)) are disordered. Positions 177–197 (SPGTTSSGSSRLPQPSGTSKT) are enriched in polar residues. Low complexity predominate over residues 198 to 214 (VVGAPSGKVSSVSSSSG). S221 carries the phosphoserine modification. Position 242 is a phosphothreonine (T242). A Phosphoserine modification is found at S290.

The protein belongs to the ZC2HC1 family. Zn(2+) serves as cofactor.

This chain is Zinc finger C2HC domain-containing protein 1A (ZC2HC1A), found in Bos taurus (Bovine).